The sequence spans 79 residues: Envelope small membrane protein (79 aa).

The Virion surface portion of the chain corresponds to 1-16 (MYDIVGTNNSILIANV). Residues 17-37 (LVLIIICLLVVIVGCALLLIL) form a helical membrane-spanning segment. The Intravirion portion of the chain corresponds to 38–75 (QFVFGVCGFVFKFVCKPTILVYNKFRNESLLNEREELL).

This sequence belongs to the betacoronaviruses E protein family. Homopentamer. Interacts with membrane protein M in the budding compartment of the host cell, which is located between endoplasmic reticulum and the Golgi complex. Interacts with Nucleoprotein.

Its subcellular location is the host Golgi apparatus membrane. In terms of biological role, plays a central role in virus morphogenesis and assembly. Acts as a viroporin and self-assembles in host membranes forming pentameric protein-lipid pores that allow ion transport. Also plays a role in the induction of apoptosis. The sequence is that of Envelope small membrane protein from Rousettus leschenaultii (Leschenault's rousette).